The sequence spans 300 residues: Bidirectional sugar transporter SWEET12 (300 aa).

At 1–4 (MVQA) the chain is on the extracellular side. Residues 5–25 (LVFAVGIVGNILSFLVILAPV) traverse the membrane as a helical segment. Positions 8-92 (AVGIVGNILS…TVYLLYAPRQ (85 aa)) constitute a MtN3/slv 1 domain. Residues 26-38 (PTFYRVYKKKSTE) lie on the Cytoplasmic side of the membrane. A helical transmembrane segment spans residues 39 to 61 (SFQSVPYAVALLSAMLWLYYALL). The Extracellular portion of the chain corresponds to 62-67 (TSDLLL). A helical transmembrane segment spans residues 68 to 88 (LSINSIGCLVESLYLTVYLLY). Topologically, residues 89–99 (APRQAMAFTLK) are cytoplasmic. The chain crosses the membrane as a helical span at residues 100–120 (LVCAMNLALFAAVVAALQLLV). The Extracellular portion of the chain corresponds to 121–128 (KATDRRVT). A helical transmembrane segment spans residues 129-149 (LAGGIGASFALAVFVAPLTII). Residues 131–213 (GGIGASFALA…VLYVVYKNPK (83 aa)) enclose the MtN3/slv 2 domain. Residues 150-162 (RQVIRTKSVEFMP) lie on the Cytoplasmic side of the membrane. Residues 163-183 (FWLSFFLTLSAVVWFFYGLLM) form a helical membrane-spanning segment. At 184–185 (KD) the chain is on the extracellular side. A helical membrane pass occupies residues 186–206 (FFVATPNVLGLLFGLAQMVLY). Residues 207-300 (VVYKNPKKNS…PPALPAVEVA (94 aa)) lie on the Cytoplasmic side of the membrane. The tract at residues 256 to 300 (ADLEAAAPATPQRPADDDAIDHRSVVVDIPPPPQPPPALPAVEVA) is disordered. Residues 269–280 (PADDDAIDHRSV) are compositionally biased toward basic and acidic residues. Positions 284–294 (IPPPPQPPPAL) are enriched in pro residues.

Belongs to the SWEET sugar transporter family. Forms homooligomers and/or heterooligomers.

It localises to the cell membrane. In terms of biological role, mediates both low-affinity uptake and efflux of sugar across the plasma membrane. Its function is as follows. Confers blight susceptibility. Confers TAL effector-mediated susceptibility to Xanthomonas oryzae pv. oryzae. In Oryza sativa subsp. japonica (Rice), this protein is Bidirectional sugar transporter SWEET12 (SWEET12).